Here is a 333-residue protein sequence, read N- to C-terminus: Tetraacyldisaccharide 4'-kinase (333 aa).

55 to 62 is a binding site for ATP; that stretch reads TAGGNGKT.

It belongs to the LpxK family.

It catalyses the reaction a lipid A disaccharide + ATP = a lipid IVA + ADP + H(+). It functions in the pathway glycolipid biosynthesis; lipid IV(A) biosynthesis; lipid IV(A) from (3R)-3-hydroxytetradecanoyl-[acyl-carrier-protein] and UDP-N-acetyl-alpha-D-glucosamine: step 6/6. In terms of biological role, transfers the gamma-phosphate of ATP to the 4'-position of a tetraacyldisaccharide 1-phosphate intermediate (termed DS-1-P) to form tetraacyldisaccharide 1,4'-bis-phosphate (lipid IVA). The protein is Tetraacyldisaccharide 4'-kinase of Proteus mirabilis (strain HI4320).